The following is a 555-amino-acid chain: Glutamine--tRNA ligase (555 aa).

The 'HIGH' region signature appears at 34 to 44 (PEPNGYLHIGH). ATP contacts are provided by residues 35–37 (EPN) and 41–47 (HIGHAKS). The L-glutamine site is built by aspartate 67 and tyrosine 212. Residues threonine 231, 261–262 (RL), and 269–271 (MSK) contribute to the ATP site. The short motif at 268–272 (VMSKR) is the 'KMSKS' region element. Positions 317 to 324 (TKQDNTIE) are interaction with tRNA.

This sequence belongs to the class-I aminoacyl-tRNA synthetase family. As to quaternary structure, monomer.

It is found in the cytoplasm. It carries out the reaction tRNA(Gln) + L-glutamine + ATP = L-glutaminyl-tRNA(Gln) + AMP + diphosphate. The protein is Glutamine--tRNA ligase of Salmonella newport (strain SL254).